The sequence spans 356 residues: Holliday junction branch migration complex subunit RuvB (356 aa).

The segment at 4–191 (TDKLATEQRI…FGIVARLEFY (188 aa)) is large ATPase domain (RuvB-L). Residues Leu30, Arg31, Gly72, Lys75, Thr76, Thr77, 138 to 140 (EDY), Arg181, Tyr191, and Arg228 contribute to the ATP site. Position 76 (Thr76) interacts with Mg(2+). The small ATPAse domain (RuvB-S) stretch occupies residues 192-262 (DAEQLSRIVR…VADAALAMLD (71 aa)). Residues 265–356 (PVGFDLMDRK…RGEWDTPDGK (92 aa)) form a head domain (RuvB-H) region. Residues Arg301, Arg320, and Arg325 each contribute to the DNA site.

Belongs to the RuvB family. As to quaternary structure, homohexamer. Forms an RuvA(8)-RuvB(12)-Holliday junction (HJ) complex. HJ DNA is sandwiched between 2 RuvA tetramers; dsDNA enters through RuvA and exits via RuvB. An RuvB hexamer assembles on each DNA strand where it exits the tetramer. Each RuvB hexamer is contacted by two RuvA subunits (via domain III) on 2 adjacent RuvB subunits; this complex drives branch migration. In the full resolvosome a probable DNA-RuvA(4)-RuvB(12)-RuvC(2) complex forms which resolves the HJ.

It localises to the cytoplasm. It catalyses the reaction ATP + H2O = ADP + phosphate + H(+). The RuvA-RuvB-RuvC complex processes Holliday junction (HJ) DNA during genetic recombination and DNA repair, while the RuvA-RuvB complex plays an important role in the rescue of blocked DNA replication forks via replication fork reversal (RFR). RuvA specifically binds to HJ cruciform DNA, conferring on it an open structure. The RuvB hexamer acts as an ATP-dependent pump, pulling dsDNA into and through the RuvAB complex. RuvB forms 2 homohexamers on either side of HJ DNA bound by 1 or 2 RuvA tetramers; 4 subunits per hexamer contact DNA at a time. Coordinated motions by a converter formed by DNA-disengaged RuvB subunits stimulates ATP hydrolysis and nucleotide exchange. Immobilization of the converter enables RuvB to convert the ATP-contained energy into a lever motion, pulling 2 nucleotides of DNA out of the RuvA tetramer per ATP hydrolyzed, thus driving DNA branch migration. The RuvB motors rotate together with the DNA substrate, which together with the progressing nucleotide cycle form the mechanistic basis for DNA recombination by continuous HJ branch migration. Branch migration allows RuvC to scan DNA until it finds its consensus sequence, where it cleaves and resolves cruciform DNA. This Burkholderia lata (strain ATCC 17760 / DSM 23089 / LMG 22485 / NCIMB 9086 / R18194 / 383) protein is Holliday junction branch migration complex subunit RuvB.